Reading from the N-terminus, the 325-residue chain is ATP-dependent 6-phosphofructokinase (325 aa).

ATP is bound at residue G12. 22 to 26 (RTIVK) contributes to the ADP binding site. Residues 73-74 (RY) and 103-106 (GDGS) contribute to the ATP site. Position 104 (D104) interacts with Mg(2+). 126–128 (TID) lines the substrate pocket. The active-site Proton acceptor is D128. R155 provides a ligand contact to ADP. 170–172 (MGH) is a binding site for substrate. ADP contacts are provided by residues 186–188 (GAE), K213, and 215–217 (KRS). Substrate contacts are provided by residues E224, R246, and 252 to 255 (HTQR).

Belongs to the phosphofructokinase type A (PFKA) family. ATP-dependent PFK group I subfamily. Prokaryotic clade 'B1' sub-subfamily. In terms of assembly, homotetramer. Mg(2+) serves as cofactor.

The protein localises to the cytoplasm. It catalyses the reaction beta-D-fructose 6-phosphate + ATP = beta-D-fructose 1,6-bisphosphate + ADP + H(+). The protein operates within carbohydrate degradation; glycolysis; D-glyceraldehyde 3-phosphate and glycerone phosphate from D-glucose: step 3/4. With respect to regulation, allosterically activated by ADP and other diphosphonucleosides, and allosterically inhibited by phosphoenolpyruvate. Its function is as follows. Catalyzes the phosphorylation of D-fructose 6-phosphate to fructose 1,6-bisphosphate by ATP, the first committing step of glycolysis. The chain is ATP-dependent 6-phosphofructokinase from Mycoplasma mobile (strain ATCC 43663 / 163K / NCTC 11711) (Mesomycoplasma mobile).